A 194-amino-acid polypeptide reads, in one-letter code: 3-isopropylmalate dehydratase small subunit (194 aa).

Belongs to the LeuD family. LeuD type 1 subfamily. Heterodimer of LeuC and LeuD.

The enzyme catalyses (2R,3S)-3-isopropylmalate = (2S)-2-isopropylmalate. It participates in amino-acid biosynthesis; L-leucine biosynthesis; L-leucine from 3-methyl-2-oxobutanoate: step 2/4. Functionally, catalyzes the isomerization between 2-isopropylmalate and 3-isopropylmalate, via the formation of 2-isopropylmaleate. The polypeptide is 3-isopropylmalate dehydratase small subunit (Anoxybacillus flavithermus (strain DSM 21510 / WK1)).